We begin with the raw amino-acid sequence, 124 residues long: Fluoride-specific ion channel FluC (124 aa).

4 helical membrane-spanning segments follow: residues 4–24, 36–56, 63–83, and 100–120; these read YLVI…TGVY, GTLI…ILFL, PLWR…LSSI, and LLNI…GIVL. Residues Gly-75 and Thr-78 each coordinate Na(+).

This sequence belongs to the fluoride channel Fluc/FEX (TC 1.A.43) family.

The protein localises to the cell inner membrane. The catalysed reaction is fluoride(in) = fluoride(out). With respect to regulation, na(+) is not transported, but it plays an essential structural role and its presence is essential for fluoride channel function. Functionally, fluoride-specific ion channel. Important for reducing fluoride concentration in the cell, thus reducing its toxicity. The chain is Fluoride-specific ion channel FluC from Sulfurihydrogenibium sp. (strain YO3AOP1).